A 392-amino-acid chain; its full sequence is MALFNVEGWSIKTKTVAFDNKTNKSSKDKKKNNRKNGKLTREQKLKEETEAELKEQVEDIPSEGSVAKDIPKKNQEKSDQNETSKKRKHDEEAPLMQVKENIEKPTKKQLTPLQQKMMAKLTGSRFRWINEQLYTISSDEALKLIKEQPQLFDEYHDGFRSQVQAWPENPVDVFVDQIRYRCMKPVNAPGGLPGLKDSKEIVIADMGCGEAQLALEINNFFKNYNKKAKKYLKRRHKVHSFDLKKANERITVADIRNVPLPDESCTIVVFCLALMGTNFLDFIKEAYRILAPRGELWIAEIKSRFSDGKGNEFVDALKLMGFFHKKTFDENKMFTRFEFFKPPAEIIEERRQKLERRQKFIEVETEKEELEKKRRKIAEGKWLLKPCIYKRR.

The tract at residues methionine 1–methionine 96 is disordered. Over residues lysine 27–lysine 38 the composition is skewed to basic residues. A coiled-coil region spans residues asparagine 32 to proline 61. The span at leucine 39–valine 57 shows a compositional bias: basic and acidic residues. Residue serine 62 is modified to Phosphoserine. Basic and acidic residues predominate over residues aspartate 69–glutamate 92. 5 residues coordinate S-adenosyl-L-methionine: histidine 156, glycine 207, aspartate 242, aspartate 254, and cysteine 271. The stretch at alanine 344–tryptophan 382 forms a coiled coil.

This sequence belongs to the methyltransferase superfamily. RRP8 family.

It is found in the nucleus. It localises to the nucleolus. The protein resides in the chromosome. Its subcellular location is the telomere. It catalyses the reaction adenosine(645) in 25S rRNA + S-adenosyl-L-methionine = N(1)-methyladenosine(645) in 25S rRNA + S-adenosyl-L-homocysteine + H(+). Functionally, S-adenosyl-L-methionine-dependent methyltransferase that specifically methylates the N(1) position of adenine 645 in 25S rRNA. Required both for ribosomal 40S and 60S subunits biogenesis. Required for efficient pre-rRNA cleavage at site A2. Also involved in telomere length regulation and maintenance. The chain is 25S rRNA (adenine(645)-N(1))-methyltransferase (RRP8) from Saccharomyces cerevisiae (strain ATCC 204508 / S288c) (Baker's yeast).